Consider the following 175-residue polypeptide: MNLIFTRIIRRFGEGKRKTPFPGDPILVPDEPYDSKIQESQLSPMPQIDAKLINHLERLSLVRFDSEQAVANLRSSIRVAKRLELVDVEGVEPMHTVWEDQECPTFEDVEEDPLPIEEVFRNASLRFDDFFVTPPGNLPLESKERFDLNVINEWDTIGKPVAPEVKLTRMTERKK.

Belongs to the GatC family. In terms of assembly, subunit of the heterotrimeric GatCAB amidotransferase (AdT) complex, composed of A, B and C subunits.

It localises to the mitochondrion. The catalysed reaction is L-glutamyl-tRNA(Gln) + L-glutamine + ATP + H2O = L-glutaminyl-tRNA(Gln) + L-glutamate + ADP + phosphate + H(+). Functionally, allows the formation of correctly charged Gln-tRNA(Gln) through the transamidation of misacylated Glu-tRNA(Gln) in the mitochondria. The reaction takes place in the presence of glutamine and ATP through an activated gamma-phospho-Glu-tRNA(Gln). The protein is Glutamyl-tRNA(Gln) amidotransferase subunit C, mitochondrial of Caenorhabditis elegans.